Here is a 254-residue protein sequence, read N- to C-terminus: Sec-independent protein translocase protein TatCy (254 aa).

Helical transmembrane passes span 24–44 (IVALAFVVFFIAGFFLAKPII), 67–87 (LYVFMQFAFIIGIVLTSPVIL), 112–132 (VSILLFLAGLSFSYYILFPFV), 157–177 (FLLQLTIPFGLLFQMPVILMF), 187–207 (MFLAKIRKYAYFTLLVIAALI), and 212–232 (LLSHMMVTVPLLILYEISILI).

Belongs to the TatC family. In terms of assembly, forms a complex with TatAy. Two types of complexes exist: one composed of TatAy and TatCy, and another composed only of TatAy.

Its subcellular location is the cell membrane. In terms of biological role, part of the twin-arginine translocation (Tat) system that transports large folded proteins containing a characteristic twin-arginine motif in their signal peptide across membranes. Required for YwbN secretion. In Bacillus subtilis (strain 168), this protein is Sec-independent protein translocase protein TatCy.